The primary structure comprises 347 residues: NADH-ubiquinone oxidoreductase chain 2 (347 aa).

The next 11 helical transmembrane spans lie at 3 to 23 (PIIFIIILLTIMLGTIIVMIS), 25 to 45 (HWLLVWIGFEMNMLAIIPIMM), 67 to 87 (SMLLMMAVIINLMFSGQWTVM), 96 to 116 (MLMTMALAMKLGMAPFHFWVP), 122 to 142 (IPLSSGLILLTWQKLAPMSVL), 145 to 165 (IFPSINLNLILTLSVLSILIG), 178 to 198 (IMAYSSIAHMGWMTAVLPYNP), 200 to 220 (MTLLNLIIYIIMTSTMFTMFM), 239 to 259 (IMTVLILATLLSMGGLPPLSG), 274 to 294 (NSIILPTFMAITALLNLYFYM), and 325 to 345 (FLPTMVVLSTMMLPLTPMLSV).

The protein belongs to the complex I subunit 2 family. Core subunit of respiratory chain NADH dehydrogenase (Complex I) which is composed of 45 different subunits. Interacts with TMEM242.

The protein resides in the mitochondrion inner membrane. It carries out the reaction a ubiquinone + NADH + 5 H(+)(in) = a ubiquinol + NAD(+) + 4 H(+)(out). In terms of biological role, core subunit of the mitochondrial membrane respiratory chain NADH dehydrogenase (Complex I) which catalyzes electron transfer from NADH through the respiratory chain, using ubiquinone as an electron acceptor. Essential for the catalytic activity and assembly of complex I. The protein is NADH-ubiquinone oxidoreductase chain 2 of Bos indicus (Zebu).